The following is a 69-amino-acid chain: Small cysteine-rich protein (69 aa).

The first 19 residues, 1-19 (MKLQLCLVLLLLGVLYVQS), serve as a signal peptide directing secretion. Residues 20–22 (VPE) constitute a propeptide that is removed on maturation.

It belongs to the Cnidaria small cysteine-rich protein (SCRiP) family. delta subfamily. In terms of processing, contains 4 disulfide bonds.

It is found in the secreted. The protein localises to the nematocyst. Its function is as follows. Induces neurotoxic symptoms on zebrafish. Has also been claimed to be implied in calcification, but this function seems improbable. This chain is Small cysteine-rich protein, found in Metridium senile (Brown sea anemone).